The sequence spans 162 residues: Disulfide bond formation protein B (162 aa).

Residues 1–8 lie on the Cytoplasmic side of the membrane; that stretch reads MTPLFRKA. The chain crosses the membrane as a helical span at residues 9–25; that stretch reads VWLLFAVSVCAFAGSLA. Over 26 to 43 the chain is Periplasmic; that stretch reads AQYVLGMEPCVLCISQRL. The cysteines at positions 35 and 38 are disulfide-linked. A helical transmembrane segment spans residues 44–60; it reads CVLATALCAAVVLACKP. Over 61–67 the chain is Cytoplasmic; that stretch reads KGRVGGL. A helical membrane pass occupies residues 68–85; it reads SGAVFISIPAVTGISVAA. At 86-141 the chain is on the periplasmic side; the sequence is YQLWLQSLPPGAAPSCGAPWTFRLKGWPLFDWFEPVVRGFGNCAEPDYLLGVALPV. An intrachain disulfide couples Cys101 to Cys128. Residues 142–160 traverse the membrane as a helical segment; sequence WSAAYFLAVVLTVWWAWAR. Over 161-162 the chain is Cytoplasmic; the sequence is AK.

The protein belongs to the DsbB family.

The protein resides in the cell inner membrane. Required for disulfide bond formation in some periplasmic proteins. Acts by oxidizing the DsbA protein. This is Disulfide bond formation protein B from Neisseria gonorrhoeae (strain ATCC 700825 / FA 1090).